The following is an 89-amino-acid chain: Acylphosphatase (89 aa).

The Acylphosphatase-like domain maps to 3 to 89 (RFTARVAGLV…QSDLTDFRRK (87 aa)). Residues Arg18 and Asn36 contribute to the active site.

The protein belongs to the acylphosphatase family.

The catalysed reaction is an acyl phosphate + H2O = a carboxylate + phosphate + H(+). The protein is Acylphosphatase (acyP) of Frankia casuarinae (strain DSM 45818 / CECT 9043 / HFP020203 / CcI3).